We begin with the raw amino-acid sequence, 559 residues long: Phosphatase and actin regulator 3 (559 aa).

The tract at residues 1–65 (MAASEDGSGC…GIRTPPVRRN (65 aa)) is disordered. Residues 15–24 (GRSQSDPSVL) show a composition bias toward polar residues. The segment covering 25–35 (TDSSATSSADA) has biased composition (low complexity). T70 is subject to Phosphothreonine. Residues 82–342 (KKKNEKLKQT…VERGKEREEA (261 aa)) are disordered. One copy of the RPEL 1 repeat lies at 93-118 (SALEKKMAGRQGREELIKKGLLEMME). The segment covering 95–113 (LEKKMAGRQGREELIKKGL) has biased composition (basic and acidic residues). Positions 134-151 (SVQSEPPTPKSETLTSED) are enriched in polar residues. A compositionally biased stretch (pro residues) spans 229–240 (PSPPLLPTPPPK). Residue S230 is modified to Phosphoserine. T236 is subject to Phosphothreonine. 2 stretches are compositionally biased toward polar residues: residues 248-262 (NVTGQATLFQASSMK) and 270-281 (GQLSTPTGSPHL). Residues 293–342 (VIEELHRALATKHRQDSFQGRESKGSPKKRLDVRLSRTSSVERGKEREEA) show a composition bias toward basic and acidic residues. Residues 346-369 (DGALENKRTAAKESEENKENLIIN) adopt a coiled-coil conformation. RPEL repeat units lie at residues 401–426 (ELLAVKLRNRPSKQELEDRNIFPRRT), 439–464 (MKLSKRLSQRPAVEELERRNILKQRN), and 477–502 (QRLTRKLNQRPTVDELRDRKILIRFS). A required for PP1CA binding and inhibition of PP1 activity region spans residues 438–518 (EMKLSKRLSQ…KAQDYDRRAD (81 aa)). Positions 450–486 (AVEELERRNILKQRNDQTEQEERREIKQRLTRKLNQR) form a coiled coil.

Belongs to the phosphatase and actin regulator family. As to quaternary structure, binds actin and PPP1CA; thus inhibiting the protein phosphatase 1 (PP1) activity. Abundantly expressed in brain. Also found in several tumors such as lung carcinomas, nervous tumors and HL-60 leukemia cells. Isoform 3 is the major form in U-937, GOTO and HL-60 leukemia cells.

Its subcellular location is the nucleus matrix. This is Phosphatase and actin regulator 3 (PHACTR3) from Homo sapiens (Human).